The chain runs to 286 residues: Bifunctional protein FolD (286 aa).

Residues 165-167 (GRS), S190, and V231 contribute to the NADP(+) site.

It belongs to the tetrahydrofolate dehydrogenase/cyclohydrolase family. In terms of assembly, homodimer.

The enzyme catalyses (6R)-5,10-methylene-5,6,7,8-tetrahydrofolate + NADP(+) = (6R)-5,10-methenyltetrahydrofolate + NADPH. It carries out the reaction (6R)-5,10-methenyltetrahydrofolate + H2O = (6R)-10-formyltetrahydrofolate + H(+). The protein operates within one-carbon metabolism; tetrahydrofolate interconversion. Its function is as follows. Catalyzes the oxidation of 5,10-methylenetetrahydrofolate to 5,10-methenyltetrahydrofolate and then the hydrolysis of 5,10-methenyltetrahydrofolate to 10-formyltetrahydrofolate. The sequence is that of Bifunctional protein FolD from Bacillus cereus (strain ZK / E33L).